A 730-amino-acid polypeptide reads, in one-letter code: Procollagen-lysine,2-oxoglutarate 5-dioxygenase 1 (730 aa).

Positions methionine 1 to glycine 20 are cleaved as a signal peptide. Asparagine 200, asparagine 403, and asparagine 541 each carry an N-linked (GlcNAc...) asparagine glycan. Positions glutamine 639–proline 730 constitute a Fe2OG dioxygenase domain. The Fe cation site is built by histidine 659 and aspartate 661. N-linked (GlcNAc...) asparagine glycosylation is present at asparagine 689. Histidine 711 contributes to the Fe cation binding site. Arginine 721 is an active-site residue.

In terms of assembly, homodimer. Requires Fe(2+) as cofactor. It depends on L-ascorbate as a cofactor.

It is found in the rough endoplasmic reticulum membrane. It catalyses the reaction L-lysyl-[collagen] + 2-oxoglutarate + O2 = (5R)-5-hydroxy-L-lysyl-[collagen] + succinate + CO2. Functionally, forms hydroxylysine residues in -Xaa-Lys-Gly- sequences in collagens. These hydroxylysines serve as sites of attachment for carbohydrate units and are essential for the stability of the intermolecular collagen cross-links. This Gallus gallus (Chicken) protein is Procollagen-lysine,2-oxoglutarate 5-dioxygenase 1 (PLOD1).